Consider the following 355-residue polypeptide: DNA polymerase IV (355 aa).

A UmuC domain is found at 4-185; it reads IIHVDMDCFY…LPLKKIPGVG (182 aa). 2 residues coordinate Mg(2+): aspartate 8 and aspartate 103. Glutamate 104 is a catalytic residue.

Belongs to the DNA polymerase type-Y family. Monomer. The cofactor is Mg(2+).

It is found in the cytoplasm. It catalyses the reaction DNA(n) + a 2'-deoxyribonucleoside 5'-triphosphate = DNA(n+1) + diphosphate. Poorly processive, error-prone DNA polymerase involved in untargeted mutagenesis. Copies undamaged DNA at stalled replication forks, which arise in vivo from mismatched or misaligned primer ends. These misaligned primers can be extended by PolIV. Exhibits no 3'-5' exonuclease (proofreading) activity. May be involved in translesional synthesis, in conjunction with the beta clamp from PolIII. This is DNA polymerase IV from Pasteurella multocida (strain Pm70).